A 463-amino-acid chain; its full sequence is Mitochondrial dynamics protein MIEF1 (463 aa).

The Mitochondrial intermembrane segment spans residues 1–23; it reads MAGAGERKGKKDDNGIGTAIDFV. The helical transmembrane segment at 24–46 threads the bilayer; sequence LSNARLVLGVGGAAMLGIATLAV. Residues 47 to 463 are Cytoplasmic-facing; the sequence is KRMYDRAISA…LSEPEVLLQT (417 aa). Positions 49–195 are dimerization; sequence MYDRAISAPT…LSGSLYDDLQ (147 aa). Phosphoserine is present on residues Ser55, Ser59, Ser79, and Ser94. Residues 57–77 are disordered; it reads PTSPTRLSHSGKRSWEEPNWM. Residues 96-123 are disordered; sequence QTLPTDSSTFDTDTFCPPRPKPVARKGQ. Residues 100–110 show a composition bias toward low complexity; it reads TDSSTFDTDTF. Residues 160–169 form an important for interaction with DNM1L region; sequence AAVDICAELR. 3 residues coordinate ADP: Ser187, Ser189, and His201. An important for interaction with DNM1L region spans residues 234–242; sequence RRENPEYFP. Residues Ser340, Arg342, and Lys368 each contribute to the ADP site.

Belongs to the SMCR7 family. As to quaternary structure, homodimer. Interacts with DNM1L. In terms of tissue distribution, expression is relatively high in heart, skeletal muscle, pancreas and kidney.

The protein localises to the mitochondrion outer membrane. In terms of biological role, mitochondrial outer membrane protein which regulates mitochondrial fission/fusion dynamics. Promotes the recruitment and association of the fission mediator dynamin-related protein 1 (DNM1L) to the mitochondrial surface independently of the mitochondrial fission FIS1 and MFF proteins. Regulates DNM1L GTPase activity and DNM1L oligomerization. Binds ADP and can also bind GDP, although with lower affinity. Does not bind CDP, UDP, ATP, AMP or GTP. Inhibits DNM1L GTPase activity in the absence of bound ADP. Requires ADP to stimulate DNM1L GTPase activity and the assembly of DNM1L into long, oligomeric tubules with a spiral pattern, as opposed to the ring-like DNM1L oligomers observed in the absence of bound ADP. Does not require ADP for its function in recruiting DNM1L. This chain is Mitochondrial dynamics protein MIEF1, found in Homo sapiens (Human).